The sequence spans 222 residues: ATP-dependent dethiobiotin synthetase BioD (222 aa).

12–17 (DVGKTI) is a binding site for ATP. Threonine 16 provides a ligand contact to Mg(2+). Lysine 37 is an active-site residue. Threonine 41 is a binding site for substrate. Residues aspartate 49, 107 to 110 (EGAG), 167 to 168 (GS), and 197 to 199 (AEG) contribute to the ATP site. Mg(2+)-binding residues include aspartate 49 and glutamate 107.

Belongs to the dethiobiotin synthetase family. As to quaternary structure, homodimer. Requires Mg(2+) as cofactor.

It localises to the cytoplasm. The enzyme catalyses (7R,8S)-7,8-diammoniononanoate + CO2 + ATP = (4R,5S)-dethiobiotin + ADP + phosphate + 3 H(+). The protein operates within cofactor biosynthesis; biotin biosynthesis; biotin from 7,8-diaminononanoate: step 1/2. Catalyzes a mechanistically unusual reaction, the ATP-dependent insertion of CO2 between the N7 and N8 nitrogen atoms of 7,8-diaminopelargonic acid (DAPA, also called 7,8-diammoniononanoate) to form a ureido ring. The protein is ATP-dependent dethiobiotin synthetase BioD of Corynebacterium diphtheriae (strain ATCC 700971 / NCTC 13129 / Biotype gravis).